Reading from the N-terminus, the 340-residue chain is Chitinase 7 (340 aa).

The N-terminal stretch at methionine 1 to alanine 32 is a signal peptide. One can recognise a Chitin-binding type-1 domain in the interval glutamate 33–valine 73. 7 disulfides stabilise this stretch: cysteine 35–cysteine 50, cysteine 44–cysteine 56, cysteine 49–cysteine 63, cysteine 67–cysteine 71, cysteine 118–cysteine 173, cysteine 185–cysteine 193, and cysteine 293–cysteine 323.

It belongs to the glycosyl hydrolase 19 family. Chitinase class I subfamily. Expressed in pistils, stamens and lodicules.

It carries out the reaction Random endo-hydrolysis of N-acetyl-beta-D-glucosaminide (1-&gt;4)-beta-linkages in chitin and chitodextrins.. Functionally, hydrolyzes chitin and may play a role in defense against fungal pathogens containing chitin. The polypeptide is Chitinase 7 (Cht7) (Oryza sativa subsp. indica (Rice)).